The following is a 148-amino-acid chain: Large ribosomal subunit protein bL9 (148 aa).

It belongs to the bacterial ribosomal protein bL9 family.

In terms of biological role, binds to the 23S rRNA. The protein is Large ribosomal subunit protein bL9 of Bacillus mycoides (strain KBAB4) (Bacillus weihenstephanensis).